The primary structure comprises 253 residues: 2-succinyl-6-hydroxy-2,4-cyclohexadiene-1-carboxylate synthase (253 aa).

The AB hydrolase-1 domain maps to 11 to 147 (PWLVCLHGLF…PEALQDWYQQ (137 aa)).

It belongs to the AB hydrolase superfamily. MenH family. Monomer.

The catalysed reaction is 5-enolpyruvoyl-6-hydroxy-2-succinyl-cyclohex-3-ene-1-carboxylate = (1R,6R)-6-hydroxy-2-succinyl-cyclohexa-2,4-diene-1-carboxylate + pyruvate. Its pathway is quinol/quinone metabolism; 1,4-dihydroxy-2-naphthoate biosynthesis; 1,4-dihydroxy-2-naphthoate from chorismate: step 3/7. The protein operates within quinol/quinone metabolism; menaquinone biosynthesis. In terms of biological role, catalyzes a proton abstraction reaction that results in 2,5-elimination of pyruvate from 2-succinyl-5-enolpyruvyl-6-hydroxy-3-cyclohexene-1-carboxylate (SEPHCHC) and the formation of 2-succinyl-6-hydroxy-2,4-cyclohexadiene-1-carboxylate (SHCHC). The protein is 2-succinyl-6-hydroxy-2,4-cyclohexadiene-1-carboxylate synthase of Pectobacterium atrosepticum (strain SCRI 1043 / ATCC BAA-672) (Erwinia carotovora subsp. atroseptica).